We begin with the raw amino-acid sequence, 287 residues long: Nucleotide-binding protein mma_3120 (287 aa).

8–15 (GISGSGKS) is an ATP binding site. 57 to 60 (DARS) serves as a coordination point for GTP.

Belongs to the RapZ-like family.

In terms of biological role, displays ATPase and GTPase activities. In Janthinobacterium sp. (strain Marseille) (Minibacterium massiliensis), this protein is Nucleotide-binding protein mma_3120.